The sequence spans 387 residues: MSEHVRSAGPPQASTAPSGGSAVHEVTSVGARVALVMAGGTGGHIFPGLAVAEALRERGWRVHWLGGRGNAGHPSMESQLVPPRGFAFESIDFSGVRGKGPLTLVFLPLRLLKAFWQSIQVVRRVKPDVVVGLGGYIAFPAGMMSVLLGKPLVLHEQNSVAGMVNKVLAGVADRVFTAFPGVFRKAEWIGNPLRPAFIRQPDPATRFAGRAGPLKLLVVGGSLGAKALNELVPRALALMPPAQRPDVTHQSGIRQIDELRANYAAAGVQAELTPFIEDTAQAFADADLIICRAGASTVTEIAAVGAAALFVPFPSAVDDHQTTNARFLVDQGGGWLLQQRDMSAAALADMLQKTDRSALLQCALKAKTMQKTDATTRVVAACEELAR.

The interval 1-22 (MSEHVRSAGPPQASTAPSGGSA) is disordered. UDP-N-acetyl-alpha-D-glucosamine contacts are provided by residues 41–43 (TGG), Asn158, Arg194, Ser222, Ile276, and Gln321.

The protein belongs to the glycosyltransferase 28 family. MurG subfamily.

It is found in the cell inner membrane. The catalysed reaction is di-trans,octa-cis-undecaprenyl diphospho-N-acetyl-alpha-D-muramoyl-L-alanyl-D-glutamyl-meso-2,6-diaminopimeloyl-D-alanyl-D-alanine + UDP-N-acetyl-alpha-D-glucosamine = di-trans,octa-cis-undecaprenyl diphospho-[N-acetyl-alpha-D-glucosaminyl-(1-&gt;4)]-N-acetyl-alpha-D-muramoyl-L-alanyl-D-glutamyl-meso-2,6-diaminopimeloyl-D-alanyl-D-alanine + UDP + H(+). Its pathway is cell wall biogenesis; peptidoglycan biosynthesis. Cell wall formation. Catalyzes the transfer of a GlcNAc subunit on undecaprenyl-pyrophosphoryl-MurNAc-pentapeptide (lipid intermediate I) to form undecaprenyl-pyrophosphoryl-MurNAc-(pentapeptide)GlcNAc (lipid intermediate II). In Polaromonas sp. (strain JS666 / ATCC BAA-500), this protein is UDP-N-acetylglucosamine--N-acetylmuramyl-(pentapeptide) pyrophosphoryl-undecaprenol N-acetylglucosamine transferase.